The primary structure comprises 1504 residues: Nischarin (1504 aa).

Ala2 is subject to N-acetylalanine. The interval Ala2–Leu133 is necessary for binding to phosphoinositide-3-P; not sufficient for targeting to endosomes. The 111-residue stretch at Arg11–Glu121 folds into the PX domain. The tract at residues Tyr120–Gly695 is necessary for homooligomerization and targeting to endosomes. The interval Leu245–Gln869 is interaction with PAK1. LRR repeat units follow at residues Ala288 to Ile309, Lys311 to Tyr332, Asn333 to Leu354, Asn356 to Tyr377, Ser378 to Gly399, and Cys403 to Val424. Residues Lys463–Arg478 are compositionally biased toward basic and acidic residues. 4 disordered regions span residues Lys463–Leu501, Ser524–Ile547, Ser554–Glu573, and Arg628–Arg687. Phosphoserine is present on residues Ser541, Ser543, and Ser546. A coiled-coil region spans residues Glu634–Gly695. 2 stretches are compositionally biased toward acidic residues: residues Gln635–Val649 and Asp661–Glu685. An interaction with LIMK region spans residues Pro660–Gln869. The segment at Lys709–Leu807 is interaction with ITGA5. A disordered region spans residues Thr1016–Ala1104. A Phosphoserine modification is found at Ser1022. Positions Pro1032–Pro1043 are enriched in basic and acidic residues. The span at Pro1063–Ala1078 shows a compositional bias: low complexity. At Thr1282 the chain carries Phosphothreonine. A Phosphoserine modification is found at Ser1284.

Homooligomer. Interacts with GRB2. Interacts with PIK3R1; probably associates with the PI3-kinase complex. Interacts with IRS4. Found in a complex with ITGA5 and PAK1. Found in a complex with LIMK1 and PAK1. Interacts with ITGA5 (via cytoplasmic domain); this interaction is direct. Interacts with PAK1 (via kinase domain); this interaction is direct and is increased upon activation of PAK1. Interacts with LIMK1 (via PDZ and kinase domain); this interaction is direct. Interacts with LIMK2; this interaction depends on LIMK2 activity. Interacts with RAC1 (activated state). Interacts with STK11; this interaction may increase STK11 activity. In terms of tissue distribution, isoform 1, isoform 3 and isoform 4 are expressed in brain. Isoform 1 is expressed in endocrine tissues.

The protein localises to the cell membrane. The protein resides in the cytoplasm. It localises to the early endosome. Its subcellular location is the recycling endosome. In terms of biological role, acts either as the functional imidazoline-1 receptor (I1R) candidate or as a membrane-associated mediator of the I1R signaling. Binds numerous imidazoline ligands that induces initiation of cell-signaling cascades triggering to cell survival, growth and migration. Its activation by the agonist rilmenidine induces an increase in phosphorylation of mitogen-activated protein kinases MAPK1 and MAPK3 in rostral ventrolateral medulla (RVLM) neurons that exhibited rilmenidine-evoked hypotension. Blocking its activation with efaroxan abolished rilmenidine-induced mitogen-activated protein kinase phosphorylation in RVLM neurons. Acts as a modulator of Rac-regulated signal transduction pathways. Suppresses Rac1-stimulated cell migration by interacting with PAK1 and inhibiting its kinase activity. Also blocks Pak-independent Rac signaling by interacting with RAC1 and inhibiting Rac1-stimulated NF-kB response element and cyclin D1 promoter activation. Also inhibits LIMK1 kinase activity by reducing LIMK1 'Tyr-508' phosphorylation. Inhibits Rac-induced cell migration and invasion in breast and colon epithelial cells. Inhibits lamellipodia formation, when overexpressed. Plays a role in protection against apoptosis. Involved in association with IRS4 in the enhancement of insulin activation of MAPK1 and MAPK3. When overexpressed, induces a redistribution of cell surface ITGA5 integrin to intracellular endosomal structures. The sequence is that of Nischarin (NISCH) from Homo sapiens (Human).